The sequence spans 100 residues: Aspartyl/glutamyl-tRNA(Asn/Gln) amidotransferase subunit C (100 aa).

It belongs to the GatC family. In terms of assembly, heterotrimer of A, B and C subunits.

The catalysed reaction is L-glutamyl-tRNA(Gln) + L-glutamine + ATP + H2O = L-glutaminyl-tRNA(Gln) + L-glutamate + ADP + phosphate + H(+). It carries out the reaction L-aspartyl-tRNA(Asn) + L-glutamine + ATP + H2O = L-asparaginyl-tRNA(Asn) + L-glutamate + ADP + phosphate + 2 H(+). Its function is as follows. Allows the formation of correctly charged Asn-tRNA(Asn) or Gln-tRNA(Gln) through the transamidation of misacylated Asp-tRNA(Asn) or Glu-tRNA(Gln) in organisms which lack either or both of asparaginyl-tRNA or glutaminyl-tRNA synthetases. The reaction takes place in the presence of glutamine and ATP through an activated phospho-Asp-tRNA(Asn) or phospho-Glu-tRNA(Gln). The polypeptide is Aspartyl/glutamyl-tRNA(Asn/Gln) amidotransferase subunit C (Streptococcus pneumoniae (strain Taiwan19F-14)).